The sequence spans 535 residues: Phosphoenolpyruvate carboxykinase (ATP) (535 aa).

Substrate is bound by residues Arg59, Tyr201, and Lys207. ATP is bound by residues Lys207, His226, and 243–251; that span reads GLSGTGKTT. Mn(2+)-binding residues include Lys207 and His226. A Mn(2+)-binding site is contributed by Asp264. ATP-binding positions include Glu292, Arg328, 444-445, and Thr450; that span reads RI. Arg328 contacts substrate.

This sequence belongs to the phosphoenolpyruvate carboxykinase (ATP) family. It depends on Mn(2+) as a cofactor.

The protein localises to the cytoplasm. It carries out the reaction oxaloacetate + ATP = phosphoenolpyruvate + ADP + CO2. It participates in carbohydrate biosynthesis; gluconeogenesis. Functionally, involved in the gluconeogenesis. Catalyzes the conversion of oxaloacetate (OAA) to phosphoenolpyruvate (PEP) through direct phosphoryl transfer between the nucleoside triphosphate and OAA. This Parabacteroides distasonis (strain ATCC 8503 / DSM 20701 / CIP 104284 / JCM 5825 / NCTC 11152) protein is Phosphoenolpyruvate carboxykinase (ATP).